The primary structure comprises 225 residues: uncharacterized protein (225 aa).

The 49-residue stretch at 166 to 214 folds into the PCI domain; it reads LNSDVIKDKILAIIENVGEITYEELAEKINIPEEDLEKYLSELKESGDI.

This is an uncharacterized protein from Methanocaldococcus jannaschii (strain ATCC 43067 / DSM 2661 / JAL-1 / JCM 10045 / NBRC 100440) (Methanococcus jannaschii).